Reading from the N-terminus, the 390-residue chain is Tuftelin (390 aa).

2 coiled-coil regions span residues 88–126 (DKMIHEKNINQLKSEVQYIQEARNCLQKLREDISSKLDR) and 162–351 (DTCI…IEKQ). Positions 358 to 390 (STQARAKTENPGSIRISKPPSPKPMPVIRVVET) are disordered.

Belongs to the tuftelin family. Interacts with TFIP11. In terms of tissue distribution, expressed in the epidermis (at protein level). Present in the extracellular enamel and is mainly associated with the crystal component.

It is found in the secreted. Involved in the structural organization of the epidermis. Involved in the mineralization and structural organization of enamel. In Homo sapiens (Human), this protein is Tuftelin (TUFT1).